The chain runs to 499 residues: Probable malate:quinone oxidoreductase (499 aa).

The protein belongs to the MQO family. FAD serves as cofactor.

The catalysed reaction is (S)-malate + a quinone = a quinol + oxaloacetate. Its pathway is carbohydrate metabolism; tricarboxylic acid cycle; oxaloacetate from (S)-malate (quinone route): step 1/1. In Exiguobacterium sp. (strain ATCC BAA-1283 / AT1b), this protein is Probable malate:quinone oxidoreductase.